Here is a 494-residue protein sequence, read N- to C-terminus: Gram-negative bacteria-binding protein 1 (494 aa).

Residues 1 to 19 (MPGLCIGILLLIGFGCTTA) form the signal peptide. The region spanning 20–120 (YKIPTPTVEL…QPLPVCNLGG (101 aa)) is the CBM39 domain. Residues Asn56 and Asn81 are each glycosylated (N-linked (GlcNAc...) asparagine). Positions 126–160 (GCSPGDDDFTDDNQLSTEDSALEPTAPSVCEPSES) are disordered. In terms of domain architecture, GH16 spans 135–494 (TDDNQLSTED…DYVRVFATDN (360 aa)). Asn185 carries an N-linked (GlcNAc...) asparagine glycan.

It belongs to the insect beta-1,3-glucan binding protein family.

Its subcellular location is the cell membrane. In terms of biological role, plays a key role in innate immunity by acting as a pattern recognition receptor for beta-1,3-glucan from fungi and lipopolysaccharide from Gram-negative bacteria. Upon recognition of invading microorganism-derived products, acts upstream of protease spz processing enzyme SPE to activate the Toll pathway and to induce the expression of antimicrobial peptides drosomycin, cecropin and attacin. This is Gram-negative bacteria-binding protein 1 from Drosophila melanogaster (Fruit fly).